The sequence spans 1461 residues: A disintegrin and metalloproteinase with thrombospondin motifs adt-1 (1461 aa).

The first 21 residues, Met-1 to Ser-21, serve as a signal peptide directing secretion. Positions Val-22 to Tyr-163 are excised as a propeptide. Asn-69 carries N-linked (GlcNAc...) asparagine glycosylation. The Cysteine switch signature appears at Ser-190–Gln-197. A glycan (N-linked (GlcNAc...) asparagine) is linked at Asn-212. One can recognise a Peptidase M12B domain in the interval Ile-233–Leu-435. His-388 contacts Zn(2+). The active site involves Glu-389. Zn(2+)-binding residues include His-392 and His-398. Cys-405 and Cys-410 are disulfide-bonded. The Disintegrin domain maps to Arg-464–Asp-546. TSP type-1 domains are found at residues His-708–Glu-759, Phe-761–Asp-802, Glu-804–Ile-852, Ser-853–Pro-898, Leu-903–Glu-952, Tyr-955–Leu-1000, Ser-1035–Leu-1083, Ile-1087–Ser-1133, Ala-1148–Ser-1200, Ala-1203–Ser-1260, Asp-1265–His-1321, Asp-1324–Asp-1378, and Asp-1382–Pro-1435. 3 disulfide bridges follow: Cys-719-Cys-751, Cys-723-Cys-758, and Cys-735-Cys-741. Cystine bridges form between Cys-816–Cys-846, Cys-820–Cys-851, Cys-831–Cys-836, Cys-862–Cys-892, Cys-866–Cys-897, and Cys-877–Cys-882. 3 disulfides stabilise this stretch: Cys-1047–Cys-1077, Cys-1051–Cys-1082, and Cys-1062–Cys-1067. 12 cysteine pairs are disulfide-bonded: Cys-1160/Cys-1194, Cys-1162/Cys-1199, Cys-1173/Cys-1184, Cys-1215/Cys-1253, Cys-1219/Cys-1259, Cys-1231/Cys-1243, Cys-1277/Cys-1314, Cys-1281/Cys-1320, Cys-1292/Cys-1304, Cys-1336/Cys-1372, Cys-1340/Cys-1377, and Cys-1351/Cys-1362.

It depends on Zn(2+) as a cofactor. In hermaphrodites, expressed in the vulva, head ganglia, ventral nerve cord and amphid neurons. Expressed in the rays of the male tail.

The protein localises to the secreted. Plays a role in ray morphogenesis in the male tail, probably by remodeling the extracellular matrix (ECM) in the cuticle. The protein is A disintegrin and metalloproteinase with thrombospondin motifs adt-1 of Caenorhabditis elegans.